A 125-amino-acid chain; its full sequence is UPF0738 protein GTNG_0708 (125 aa).

The protein belongs to the UPF0738 family.

This Geobacillus thermodenitrificans (strain NG80-2) protein is UPF0738 protein GTNG_0708.